We begin with the raw amino-acid sequence, 573 residues long: Ascochitine biosynthesis cluster transcriptional regulator (573 aa).

It is found in the nucleus. Its function is as follows. Transcription factor that regulates the expression of the gene cluster that mediates the biosynthesis of the mycotoxin ascochitine, an o-quinone methide that plays a possible protective role against other microbial competitors in nature and is considered to be important for pathogenicity of legume-associated Didymella species. The polypeptide is Ascochitine biosynthesis cluster transcriptional regulator (Didymella fabae (Leaf and pod spot disease fungus)).